A 94-amino-acid polypeptide reads, in one-letter code: Pyrimidine/purine nucleoside phosphorylase (94 aa).

This sequence belongs to the nucleoside phosphorylase PpnP family.

The enzyme catalyses a purine D-ribonucleoside + phosphate = a purine nucleobase + alpha-D-ribose 1-phosphate. It carries out the reaction adenosine + phosphate = alpha-D-ribose 1-phosphate + adenine. The catalysed reaction is cytidine + phosphate = cytosine + alpha-D-ribose 1-phosphate. It catalyses the reaction guanosine + phosphate = alpha-D-ribose 1-phosphate + guanine. The enzyme catalyses inosine + phosphate = alpha-D-ribose 1-phosphate + hypoxanthine. It carries out the reaction thymidine + phosphate = 2-deoxy-alpha-D-ribose 1-phosphate + thymine. The catalysed reaction is uridine + phosphate = alpha-D-ribose 1-phosphate + uracil. It catalyses the reaction xanthosine + phosphate = alpha-D-ribose 1-phosphate + xanthine. Its function is as follows. Catalyzes the phosphorolysis of diverse nucleosides, yielding D-ribose 1-phosphate and the respective free bases. Can use uridine, adenosine, guanosine, cytidine, thymidine, inosine and xanthosine as substrates. Also catalyzes the reverse reactions. The protein is Pyrimidine/purine nucleoside phosphorylase of Psychromonas ingrahamii (strain DSM 17664 / CCUG 51855 / 37).